The following is a 192-amino-acid chain: Ras-like GTP-binding protein O-RHO (192 aa).

Residue Gly12–Thr19 coordinates GTP. Residues Tyr34–Tyr42 carry the Effector region motif. GTP contacts are provided by residues Asp59–Gln63 and Asn117–Thr120. Residue Cys189 is modified to Cysteine methyl ester. Residue Cys189 is the site of S-geranylgeranyl cysteine attachment. Residues Leu190–Leu192 constitute a propeptide, removed in mature form.

It belongs to the small GTPase superfamily. Rho family.

It is found in the cell membrane. This is Ras-like GTP-binding protein O-RHO from Diplobatis ommata (Ocellated electric ray).